We begin with the raw amino-acid sequence, 274 residues long: GPN-loop GTPase 3 (274 aa).

Glycine 13–threonine 18 provides a ligand contact to GTP. A Gly-Pro-Asn (GPN)-loop; involved in dimer interface motif is present at residues glycine 70–asparagine 72. Serine 173–aspartate 176 is a GTP binding site. The interval serine 255–glutamate 274 is disordered. A compositionally biased stretch (acidic residues) spans glutamate 265–glutamate 274.

Belongs to the GPN-loop GTPase family. As to quaternary structure, heterodimers with GPN1 or GPN2. Binds to RNA polymerase II (RNAPII).

Small GTPase required for proper nuclear import of RNA polymerase II and III (RNAPII and RNAPIII). May act at an RNAP assembly step prior to nuclear import. In Debaryomyces hansenii (strain ATCC 36239 / CBS 767 / BCRC 21394 / JCM 1990 / NBRC 0083 / IGC 2968) (Yeast), this protein is GPN-loop GTPase 3.